We begin with the raw amino-acid sequence, 955 residues long: MAM domain-containing glycosylphosphatidylinositol anchor protein 1 (955 aa).

Residues 1–18 (MEVTCLLLLALIPFHCRG) form the signal peptide. 2 consecutive Ig-like domains span residues 24 to 123 (PAQA…KSIR) and 132 to 230 (PMLT…KAIT). Asparagine 42 and asparagine 90 each carry an N-linked (GlcNAc...) asparagine glycan. 2 disulfide bridges follow: cysteine 60–cysteine 108 and cysteine 157–cysteine 214. N-linked (GlcNAc...) asparagine glycans are attached at residues asparagine 235, asparagine 247, asparagine 257, asparagine 307, and asparagine 331. Residues 240–323 (PALKLSVNET…VGNPAKKTVN (84 aa)) enclose the Ig-like 3 domain. An intrachain disulfide couples cysteine 262 to cysteine 308. Ig-like domains lie at 338–432 (PDVI…VEVN), 440–532 (PTIS…AQVQ), and 539–631 (PEVE…FQVS). Cysteine 357 and cysteine 415 are oxidised to a cystine. N-linked (GlcNAc...) asparagine glycosylation is present at asparagine 432. Intrachain disulfides connect cysteine 463–cysteine 514 and cysteine 560–cysteine 615. Residues 643–743 (TPNPTRSHKL…SRIIHYTEPI (101 aa)) form the Fibronectin type-III domain. N-linked (GlcNAc...) asparagine glycans are attached at residues asparagine 655 and asparagine 747. The 168-residue stretch at 751–918 (NTCHFEDEKI…VTLKKGECPR (168 aa)) folds into the MAM domain. Positions 779-788 (LTQNPKRSPN) are enriched in polar residues. Residues 779 to 798 (LTQNPKRSPNTGPPTDISGT) form a disordered region. Asparagine 826 is a glycosylation site (N-linked (GlcNAc...) asparagine). A lipid anchor (GPI-anchor amidated serine) is attached at serine 932. Residues 933–955 (GAPCQSSPQLWGPMAIFLLALQR) constitute a propeptide, removed in mature form.

Interacts heterophilically through its MAM domain with proteins in axon-rich regions and through its Ig-like domains with proteins in differentiating muscle. Interacts (through the Ig-like domains) with NLGN2. Has been found in brain, heart, skeletal muscle and kidney. Found to be overexpressed in tumor tissues.

The protein localises to the cell membrane. Its function is as follows. Required for radial migration of cortical neurons in the superficial layer of the neocortex. Plays a role in the formation or maintenance of inhibitory synapses. May function by inhibiting the activity of NLGN2. In Homo sapiens (Human), this protein is MAM domain-containing glycosylphosphatidylinositol anchor protein 1 (MDGA1).